We begin with the raw amino-acid sequence, 588 residues long: MYRWLTKVLGTILRLCERPAPGARALLKRRRSSSSLFSTAVDTDEIPAKRPRLDCFIHQVKNSLYNAASLFGFPFQLTTKPMVSSACNGTRNVAPSGEVFSNSPSCELTTSGSCSSMLKLGNKSPNGISDYPKIRVTVARDQPRRVLPSFGFTLKSEGYNRRPSGRRHSKSNPESSLPWKPQEQGVTEMISEEGGKGARRPHCTVEEGVQKDEREKYLKLLERLKEGAHGSTFPPAVSHHSSQRTQMDTLKTKGWMEEQNHGVRTTHLVPKQYRVVETRGPLCSVRSEKRYSKGKADTEKVVGLRFEKDGTRGHQLEPDLSEEVSARLRLGSGSNGLLRRKISVLEAKEKNFPSKEKDRRTEDLFELTEDMEKEISNALGHGPPDEILSSAFKLRITRGDIQTLKNYHWLNDEVINFYMNLLVERSKKQGYPALHALSTFFYPKLKSGGYQAVKRWTKGVNLFDQELVLVPIHRKVHWSLVVMDLRKKCLKYLDSMGQKGHRICEILLQYLQDESKTKRNTDLNLLEWTHYSMKPHEIPQQLNGSDCGMFTCKYADYISRDKPITFTQHQMPLFRKKMVWEILHQQLL.

Positions 28–31 (KRRR) match the Nuclear localization signal motif. Serine 32 is modified (phosphoserine). A Nuclear localization signal motif is present at residues 47–52 (PAKRPR). The axin-binding stretch occupies residues 72–381 (GFPFQLTTKP…EKEISNALGH (310 aa)). The tract at residues 157-184 (EGYNRRPSGRRHSKSNPESSLPWKPQEQ) is disordered. The Nuclear export signal signature appears at 316–331 (LEPDLSEEVSARLRLG). 2 positions are modified to phosphoserine: serine 332 and serine 343. The segment at 394–558 (LRITRGDIQT…MFTCKYADYI (165 aa)) is protease. Catalysis depends on residues histidine 477 and aspartate 494. Catalysis depends on cysteine 547, which acts as the Nucleophile.

The protein belongs to the peptidase C48 family. In terms of assembly, binds to SUMO2 and SUMO3. Interacts with the C-terminal domain of NUP153 via its N-terminus. Interacts with MTA1. Binds to AXIN1. Polyubiquitinated; which leads to proteasomal degradation. As to expression, ubiquitous. Highly expressed in brain, lung and testis.

It localises to the nucleus. Its subcellular location is the nuclear pore complex. The protein resides in the nucleus membrane. It is found in the cytoplasm. Functionally, protease that catalyzes two essential functions in the SUMO pathway. The first is the hydrolysis of an alpha-linked peptide bond at the C-terminal end of the small ubiquitin-like modifier (SUMO) propeptides, SUMO1, SUMO2 and SUMO3 leading to the mature form of the proteins. The second is the deconjugation of SUMO1, SUMO2 and SUMO3 from targeted proteins, by cleaving an epsilon-linked peptide bond between the C-terminal glycine of the mature SUMO and the lysine epsilon-amino group of the target protein. May down-regulate CTNNB1 levels and thereby modulate the Wnt pathway. Deconjugates SUMO2 from MTA1. Plays a dynamic role in adipogenesis by desumoylating and promoting the stabilization of CEBPB. Acts as a regulator of the cGAS-STING pathway by catalyzing desumoylation of CGAS and STING1 during the late phase of viral infection. The polypeptide is Sentrin-specific protease 2 (Senp2) (Rattus norvegicus (Rat)).